Reading from the N-terminus, the 806-residue chain is MGSSKKHRGEKEAAGTTAAAGTGGTTEQPPRHREHKKHKHRSSGGGSSGGERRKRSRERGSERGSGRRGAEAEARSGAHGRERSQAEPSERRVKREKRDDGYEAAASSKASSGDASSLSIEETNKLRAKLGLKPLEVNAVKKEAGTKEEPVAADVINPMALRQREELREKLAAAKEKRLLNQKLGKIKTLGEDDPWLDDTAAWIERSRQLQKEKDLAEKRAKLLEEMDQEFGVSTLVEEEFEQRRQDLYSARDLQGLTVEHAIDSFREGETVVLTLKDKGVLQDGEDVLVNVNMVDKERADKNVELRKKKPDYLPYAEDESVDDLAQQKPRSILAKYDEELEGERPHSFRLEQGGMADGLRERELEEIRTKLRLQAQSLSSVGPRLASEYLSPEEMVTFKKTKRRVKKIRKKEKEVIMRADDLLPLGDQTQDGDFGSRLRGRGRRRVPEVEEEALEDEEKDPVAQPPPSDDTRVENMDISDEEDGGALPPGSPEGLEEDEAELELQKQLEKGRRLRQLQQLQQLRDSGEKVLEIVKKLESRQRGWEEEEDPERKGTIVFNATSEFCRTLGEIPTYGLAGNREEQEELMDFERDEERSANGGSESDGEENIGWSTVNLDEEKQHQDFSASSTTILDEEPIVNRGLAAALLLCQNKGLLETTVQKVARVKAPNKSLPSAVYCIEDKMAIDDKYSRREEYRGFTQDFKEKDGYKPDVKIEYVDETGRKLTPKEAFRQLSHRFHGKGSGKMKTERRMKKLDEEALLKKMSSSDTPLGTVALLQEKQKAQKTPYIVLSGSGKSMNANTITK.

The tract at residues 1–121 is disordered; sequence MGSSKKHRGE…SGDASSLSIE (121 aa). The segment covering 32-42 has biased composition (basic residues); that stretch reads HREHKKHKHRS. Basic and acidic residues predominate over residues 58 to 101; the sequence is ERGSERGSGRRGAEAEARSGAHGRERSQAEPSERRVKREKRDDG. Residues 104-119 are compositionally biased toward low complexity; sequence AAASSKASSGDASSLS. Residues Lys-125 and Lys-133 each participate in a glycyl lysine isopeptide (Lys-Gly) (interchain with G-Cter in SUMO2) cross-link. Lys-141 participates in a covalent cross-link: Glycyl lysine isopeptide (Lys-Gly) (interchain with G-Cter in SUMO1); alternate. Lys-141 is covalently cross-linked (Glycyl lysine isopeptide (Lys-Gly) (interchain with G-Cter in SUMO2); alternate). Residues Lys-147 and Lys-188 each participate in a glycyl lysine isopeptide (Lys-Gly) (interchain with G-Cter in SUMO2) cross-link. Residues 157–231 adopt a coiled-coil conformation; that stretch reads NPMALRQREE…KLLEEMDQEF (75 aa). Residue Thr-189 is modified to Phosphothreonine. A Glycyl lysine isopeptide (Lys-Gly) (interchain with G-Cter in SUMO2) cross-link involves residue Lys-277. Ser-321 carries the post-translational modification Phosphoserine. Residues Lys-329 and Lys-336 each participate in a glycyl lysine isopeptide (Lys-Gly) (interchain with G-Cter in SUMO2) cross-link. Ser-348 bears the Phosphoserine mark. Residues Lys-400 and Lys-414 each participate in a glycyl lysine isopeptide (Lys-Gly) (interchain with G-Cter in SUMO2) cross-link. Residues 418-504 form a disordered region; the sequence is MRADDLLPLG…GLEEDEAELE (87 aa). Thr-430 carries the phosphothreonine modification. A compositionally biased stretch (acidic residues) spans 450–460; sequence VEEEALEDEEK. 3 positions are modified to phosphoserine: Ser-480, Ser-492, and Ser-527. The stretch at 494 to 540 forms a coiled coil; it reads EGLEEDEAELELQKQLEKGRRLRQLQQLQQLRDSGEKVLEIVKKLES. A Glycyl lysine isopeptide (Lys-Gly) (interchain with G-Cter in SUMO2) cross-link involves residue Lys-554. The disordered stretch occupies residues 578-610; that stretch reads AGNREEQEELMDFERDEERSANGGSESDGEENI. 4 positions are modified to phosphoserine: Ser-597, Ser-602, Ser-604, and Ser-627. Residues Lys-654, Lys-663, and Lys-690 each participate in a glycyl lysine isopeptide (Lys-Gly) (interchain with G-Cter in SUMO2) cross-link. Thr-701 carries the phosphothreonine modification. Glycyl lysine isopeptide (Lys-Gly) (interchain with G-Cter in SUMO2) cross-links involve residues Lys-705, Lys-715, Lys-729, Lys-755, and Lys-764. At Ser-767 the chain carries Phosphoserine. Phosphothreonine is present on Thr-770. Glycyl lysine isopeptide (Lys-Gly) (interchain with G-Cter in SUMO2) cross-links involve residues Lys-781 and Lys-786. Residue Ser-795 is modified to Phosphoserine. Residue Lys-797 forms a Glycyl lysine isopeptide (Lys-Gly) (interchain with G-Cter in SUMO2) linkage.

This sequence belongs to the SNU66/SART1 family. In terms of assembly, identified in the spliceosome C complex. Component of the U4/U6-U5 tri-snRNP complex composed of the U4, U6 and U5 snRNAs and at least PRPF3, PRPF4, PRPF6, PRPF8, PRPF31, SNRNP200, TXNL4A, SNRNP40, DDX23, CD2BP2, PPIH, SNU13, EFTUD2, SART1 and USP39. Interacts with UBL5. Interacts with IVNS1ABP (via Kelch repeats). Post-translationally, sumoylated with SUMO2. In terms of tissue distribution, ubiquitously expressed. Shows a high expression in fetal liver and a low expression in adult liver.

It is found in the nucleus. Plays a role in mRNA splicing as a component of the U4/U6-U5 tri-snRNP, one of the building blocks of the spliceosome. May also bind to DNA. The chain is U4/U6.U5 tri-snRNP-associated protein 1 (Sart1) from Mus musculus (Mouse).